A 233-amino-acid chain; its full sequence is DNA repair protein RecO (233 aa).

This sequence belongs to the RecO family.

In terms of biological role, involved in DNA repair and RecF pathway recombination. The polypeptide is DNA repair protein RecO (Pseudomonas aeruginosa (strain UCBPP-PA14)).